We begin with the raw amino-acid sequence, 769 residues long: MASCPKAIWSWRFQRVVFRSVQLLCFSILIFELMTQKEVSAWTYHYSDKPYSWNYSRAFCQKYYTDLVAIQNKNEIAYLNETIPYYNSYYWIGIRKIDNKWTWVGTKKTLTEEAENWADNEPNNKKNNQDCVEIYIKSPSAPGKWNDEPCGKRKRALCYRASCQDMSCSKQGECIETIGNYTCSCYPGFYGPECEYVRECGEFDLPQNVHMNCSHPLGNFSFKSQCSFHCAEGYALNGPRELECLASGIWTNSPPQCVAVQCPALKSPEQGSMSCFHSAKAFQHQSSCSFSCEEGFTLVGPEVVHCTALGVWTAPTPVCKAIACESLESPVHGSMDCSPSPRAFQYNTSCSFRCAEGFTLRGADTVRCADSGEWTAPAPVCQALQCQDLPTSNKARVNCSHPFGDFRYQSTCSFTCDEGSFLVGASVLQCLDTGNWDAPFPECQAVTCAPLPNPQNGEKTCVQPLGGSSYKSTCWFTCHEGFSLSGPERLDCTPSGHWTGSPPTCEASKCPELSAPEQGSLDCPDTHGEFIVGSICHFSCNEGLKLEGSNHVECTASGRWTAPPPSCKVDTVSAPAPGLRCPSLIAPNQGTMSCQHHLRNFGLNTTCHFGCKAGFTLMGESALQCRPSRQWTAVAPTCRAVKCSKLPVTEPIVMNCSNPWGNFSYGSTCSFHCPEGQLLNGSERTACQENGQWSTTMPTCQAGPLTIQEALTYIGGAAAGTTGLVTSSILLALLRRRRRQKDDGKSPLNPQSHLGTYGVFTNAAFDPSP.

An N-terminal signal peptide occupies residues 1–32 (MASCPKAIWSWRFQRVVFRSVQLLCFSILIFE). The Extracellular segment spans residues 33–717 (LMTQKEVSAW…QEALTYIGGA (685 aa)). N54 and N80 each carry an N-linked (GlcNAc...) asparagine glycan. Residues 58–158 (AFCQKYYTDL…PCGKRKRALC (101 aa)) form the C-type lectin domain. Disulfide bonds link C60/C158, C131/C150, C163/C174, C168/C183, C185/C194, C200/C244, C230/C257, C262/C306, C292/C319, C324/C368, C354/C381, C386/C430, C416/C443, C448/C492, C478/C505, C510/C554, C540/C567, C581/C625, C611/C638, C643/C687, and C673/C700. Ca(2+)-binding residues include E121, N123, and N124. Position 123 (N123) interacts with a carbohydrate. The a carbohydrate site is built by E133 and N146. N146 and D147 together coordinate Ca(2+). The EGF-like domain occupies 159–195 (YRASCQDMSCSKQGECIETIGNYTCSCYPGFYGPECE). N180 carries N-linked (GlcNAc...) asparagine glycosylation. 8 Sushi domains span residues 198-259 (RECG…QCVA), 260-321 (VQCP…VCKA), 322-383 (IACE…VCQA), 384-445 (LQCQ…ECQA), 446-507 (VTCA…TCEA), 508-569 (SKCP…SCKV), 579-640 (LRCP…TCRA), and 641-702 (VKCS…TCQA). 2 N-linked (GlcNAc...) asparagine glycosylation sites follow: N212 and N219. An N-linked (GlcNAc...) asparagine glycan is attached at N347. A glycan (N-linked (GlcNAc...) asparagine) is linked at N398. A glycan (N-linked (GlcNAc...) asparagine) is linked at N604. N655, N662, and N680 each carry an N-linked (GlcNAc...) asparagine glycan. Residues 718-734 (AAGTTGLVTSSILLALL) form a helical membrane-spanning segment. The Cytoplasmic segment spans residues 735–769 (RRRRRQKDDGKSPLNPQSHLGTYGVFTNAAFDPSP). The interval 740–769 (QKDDGKSPLNPQSHLGTYGVFTNAAFDPSP) is disordered. The Endocytosis signal signature appears at 757–760 (YGVF). An interaction with SNX17 region spans residues 760-769 (FTNAAFDPSP).

It belongs to the selectin/LECAM family. In terms of assembly, interacts with SNX17. Interacts with SELPLG/PSGL1 and PODXL2 and mediates neutrophil adhesion and leukocyte rolling. This interaction requires the sialyl-Lewis X epitope of SELPLG and PODXL2, and specific tyrosine sulfation on SELPLG. Interacts (via C-type lectin domain) with alpha-IIb/beta3 integrin ITGA2B:ITGB3 and alpha-V/beta-3 integrin ITGAV:ITGB3. Interacts with alpha5/beta1 integrin ITGA5:ITGB1 and alpha4/beta1 integrin ITGA4:ITGB.

Its subcellular location is the cell membrane. In terms of biological role, ca(2+)-dependent receptor for myeloid cells that binds to carbohydrates on neutrophils and monocytes. Mediates the interaction of activated endothelial cells or platelets with leukocytes. The ligand recognized is sialyl-Lewis X. Mediates rapid rolling of leukocyte rolling over vascular surfaces during the initial steps in inflammation through interaction with SELPLG. Mediates cell-cell interactions and cell adhesion via the interaction with integrin alpha-IIb/beta3 (ITGA2B:ITGB3) and integrin alpha-V/beta-3 (ITGAV:ITGB3). This Ovis aries (Sheep) protein is P-selectin (SELP).